A 166-amino-acid polypeptide reads, in one-letter code: Regulatory protein RecX (166 aa).

The protein belongs to the RecX family.

The protein localises to the cytoplasm. Its function is as follows. Modulates RecA activity. The polypeptide is Regulatory protein RecX (Escherichia coli O7:K1 (strain IAI39 / ExPEC)).